The following is an 83-amino-acid chain: NAD(P)H-quinone oxidoreductase subunit L, organellar chromatophore (83 aa).

2 consecutive transmembrane segments (helical) span residues Leu17 to Tyr37 and Leu53 to Leu73.

It belongs to the complex I NdhL subunit family. As to quaternary structure, NDH-1 can be composed of about 15 different subunits; different subcomplexes with different compositions have been identified which probably have different functions.

Its subcellular location is the plastid. It localises to the organellar chromatophore thylakoid membrane. It carries out the reaction a plastoquinone + NADH + (n+1) H(+)(in) = a plastoquinol + NAD(+) + n H(+)(out). It catalyses the reaction a plastoquinone + NADPH + (n+1) H(+)(in) = a plastoquinol + NADP(+) + n H(+)(out). NDH-1 shuttles electrons from an unknown electron donor, via FMN and iron-sulfur (Fe-S) centers, to quinones in the respiratory and/or the photosynthetic chain. The immediate electron acceptor for the enzyme in this species is believed to be plastoquinone. Couples the redox reaction to proton translocation, and thus conserves the redox energy in a proton gradient. The polypeptide is NAD(P)H-quinone oxidoreductase subunit L, organellar chromatophore (Paulinella chromatophora).